The following is a 498-amino-acid chain: Cytochrome P450 monooxygenase aflU (498 aa).

The helical transmembrane segment at 5–27 threads the bilayer; it reads TVYTSLIGLLVALTVRSIYRVYF. N-linked (GlcNAc...) asparagine glycans are attached at residues Asn259 and Asn354. Cys438 contributes to the heme binding site.

It belongs to the cytochrome P450 family. It depends on heme as a cofactor.

The protein localises to the membrane. It functions in the pathway mycotoxin biosynthesis; aflatoxin biosynthesis. In terms of biological role, cytochrome P450 monooxygenase; part of the gene cluster that mediates the biosynthesis of aflatoxins, a group of polyketide-derived furanocoumarins, and part of the most toxic and carcinogenic compounds among the known mycotoxins. The four major aflatoxins produced by A.parasiticus are aflatoxin B1 (AFB1), aflatoxin B2 (AFB2), aflatoxin G1 (AFG1) and aflatoxin G2 (AFG2). Within the aflatoxin pathway, the cytochrome P450 monooxygenase aflU is involved in the last steps in which OMST is converted to aflatoxins B1 and G1, and DHOMST to aflatoxins B2 and G2. The biosynthesis of aflatoxins begins with the norsolorinic acid synthase aflC that combines a hexanoyl starter unit produced by the fatty acid synthase aflA/aflB and 7 malonyl-CoA extender units to synthesize the precursor NOR. The second step is the conversion of NOR to averantin and requires the norsolorinic acid ketoreductase aflD, which catalyzes the dehydration of norsolorinic acid to form (1'S)-averantin. The norsolorinic acid reductases aflE and aflF may also play a role in the conversion of NOR to AVN. The cytochrome P450 monooxygenase aflG then catalyzes the hydroxylation of AVN to 5'hydroxyaverantin (HAVN). The next step is performed by the 5'-hydroxyaverantin dehydrogenase aflH that transforms HAVN to 5'-oxoaverantin (OAVN) which is further converted to averufin (AVF) by aflK that plays a dual role in the pathway, as a 5'-oxoaverantin cyclase that mediates conversion of 5'-oxoaverantin, as well as a versicolorin B synthase in a later step in the pathway. The averufin oxidase aflI catalyzes the conversion of AVF to versiconal hemiacetal acetate (VHA). VHA is then the substrate for the versiconal hemiacetal acetate esterase aflJ to yield versiconal (VAL). Versicolorin B synthase aflK then converts VAL to versicolorin B (VERB) by closing the bisfuran ring of aflatoxin which is required for DNA-binding, thus giving to aflatoxin its activity as a mutagen. Then, the activity of the versicolorin B desaturase aflL leads to versicolorin A (VERA). A branch point starts from VERB since it can also be converted to dihydrodemethylsterigmatocystin (DMDHST), probably also by aflL, VERA being a precursor for aflatoxins B1 and G1, and DMDHST for aflatoxins B2 and G2. Next, the versicolorin reductase aflM and the cytochrome P450 monooxygenase aflN are involved in conversion of VERA to demethylsterigmatocystin (DMST). AflX and aflY seem also involved in this step, through probable aflX-mediated epoxide ring-opening step following versicolorin A oxidation and aflY-mediated Baeyer-Villiger oxidation required for the formation of the xanthone ring. The methyltransferase aflO then leads to the modification of DMST to sterigmatocystin (ST), and of DMDHST to dihydrosterigmatocystin (DHST). Both ST and DHST are then substrates of the O-methyltransferase aflP to yield O-methylsterigmatocystin (OMST) and dihydro-O-methylsterigmatocystin (DHOMST), respectively. Finally OMST is converted to aflatoxins B1 and G1, and DHOMST to aflatoxins B2 and G2, via the action of several enzymes including O-methylsterigmatocystin oxidoreductase aflQ, the cytochrome P450 monooxygenase aflU, but also the NADH-dependent flavin oxidoreductase nadA which is specifically required for the synthesis of AFG1. The sequence is that of Cytochrome P450 monooxygenase aflU from Aspergillus parasiticus (strain ATCC 56775 / NRRL 5862 / SRRC 143 / SU-1).